We begin with the raw amino-acid sequence, 432 residues long: Adenylosuccinate synthetase (432 aa).

GTP contacts are provided by residues 13–19 and 41–43; these read GDEGKGK and GHT. The Proton acceptor role is filled by aspartate 14. Mg(2+) contacts are provided by aspartate 14 and glycine 41. IMP contacts are provided by residues 14–17, 39–42, threonine 130, arginine 144, glutamine 225, threonine 240, and arginine 306; these read DEGK and NAGH. Histidine 42 acts as the Proton donor in catalysis. 302–308 contacts substrate; the sequence is TVTGRAR. GTP contacts are provided by residues arginine 308, 334–336, and 416–418; these read KLD and STG.

This sequence belongs to the adenylosuccinate synthetase family. As to quaternary structure, homodimer. Mg(2+) is required as a cofactor.

Its subcellular location is the cytoplasm. It carries out the reaction IMP + L-aspartate + GTP = N(6)-(1,2-dicarboxyethyl)-AMP + GDP + phosphate + 2 H(+). It participates in purine metabolism; AMP biosynthesis via de novo pathway; AMP from IMP: step 1/2. In terms of biological role, plays an important role in the de novo pathway of purine nucleotide biosynthesis. Catalyzes the first committed step in the biosynthesis of AMP from IMP. The chain is Adenylosuccinate synthetase from Herminiimonas arsenicoxydans.